The chain runs to 141 residues: Protein nfe1 (141 aa).

This sequence to the N-terminal of nitrogenase iron protein (NifH). Has lost the ATP-binding site.

Functionally, responsible for the nodulation efficiency and competitive ability of strain GR4 on alfalfa roots. In Rhizobium meliloti (Ensifer meliloti), this protein is Protein nfe1 (nfe1).